Reading from the N-terminus, the 363-residue chain is Forkhead box protein I1 (363 aa).

The span at 1–18 (MNPVQQPAQQRSPASSLP) shows a compositional bias: low complexity. 3 disordered regions span residues 1 to 24 (MNPVQQPAQQRSPASSLPHPKRAQ), 210 to 269 (DNGN…SPPA), and 344 to 363 (TTAQKQPQFLQQPPLYQGRY). A DNA-binding region (fork-head) is located at residues 125–219 (RPPYSYSALI…DNGNFRRKRK (95 aa)). Positions 231–243 (KIGEDHLNPKGKE) are enriched in basic and acidic residues. 2 stretches are compositionally biased toward low complexity: residues 244–258 (SPPMITPSSPEEPSP) and 347–363 (QKQPQFLQQPPLYQGRY).

Its subcellular location is the nucleus. Its function is as follows. Transcription factor. Essential for ventral specification of the early cephalic (head) ectoderm during gastrulation, playing a role in the 'non-neural' versus 'neural' cell fate choice. Binds to DNA via the target sequence 5'-[AG]TAAA[CT]A-3', with 5'-ATAAACA-3' being the preferred binding site. This Xenopus tropicalis (Western clawed frog) protein is Forkhead box protein I1.